We begin with the raw amino-acid sequence, 414 residues long: MEVEVKAKKAKEASRKMAVLDTETKNRALINMAEALLENADKILKANEKDVLEAERRNLKASLVDRLKLDEKRIKAMAEGLKEVASLKDPVGDIEEMWIRPNGLQIGKMRVPIGVIGMIYESRPNVTADAAGLCLKAGNAVILRGGSDAINSNIAIASILAEAAYKSGIPEGAIQLIENTDREEVNRMMKLNGLIDLIIPRGGTSLIKNVIENSTVPVIETGVGNCHIFVDESANFEMAKDIIVNAKVQRPGVCNAVETVLVHKGIAERFLPVMVKELSSHGVEIRGCELTKRICPDVKEATEEDWATEYLDLILAVKVVENIDEALEHISKYSTGHSESIVTENYTNAMRFLKSVDSAAVYVNASTRFTDGGEFGFGAEIGISTQKMHARGPMGLKELTTYKYVILGSGQIRK.

Belongs to the gamma-glutamyl phosphate reductase family.

The protein resides in the cytoplasm. It carries out the reaction L-glutamate 5-semialdehyde + phosphate + NADP(+) = L-glutamyl 5-phosphate + NADPH + H(+). It functions in the pathway amino-acid biosynthesis; L-proline biosynthesis; L-glutamate 5-semialdehyde from L-glutamate: step 2/2. In terms of biological role, catalyzes the NADPH-dependent reduction of L-glutamate 5-phosphate into L-glutamate 5-semialdehyde and phosphate. The product spontaneously undergoes cyclization to form 1-pyrroline-5-carboxylate. The protein is Gamma-glutamyl phosphate reductase of Caldanaerobacter subterraneus subsp. tengcongensis (strain DSM 15242 / JCM 11007 / NBRC 100824 / MB4) (Thermoanaerobacter tengcongensis).